Here is a 152-residue protein sequence, read N- to C-terminus: Large ribosomal subunit protein uL13 (152 aa).

The disordered stretch occupies residues 130–152 (HPHEAQSPEVLDLASKNPKNTRS).

Belongs to the universal ribosomal protein uL13 family. In terms of assembly, part of the 50S ribosomal subunit.

This protein is one of the early assembly proteins of the 50S ribosomal subunit, although it is not seen to bind rRNA by itself. It is important during the early stages of 50S assembly. The protein is Large ribosomal subunit protein uL13 of Dinoroseobacter shibae (strain DSM 16493 / NCIMB 14021 / DFL 12).